Consider the following 870-residue polypeptide: Importin subunit beta-1 (870 aa).

Ala-2 carries the N-acetylalanine modification. 18 HEAT repeats span residues Glu-4–Gln-33, Leu-35–Leu-67, Met-87–Gln-126, Leu-132–Glu-161, Val-172–Leu-204, Asp-214–Thr-249, Ala-255–Gly-304, Phe-313–Gly-361, Val-365–Leu-395, Leu-403–Phe-440, Cys-456–Gly-492, Thr-498–Arg-535, Ser-542–Ile-588, Thr-596–Ala-637, Ala-642–Leu-679, Leu-684–Ile-722, Trp-730–Phe-776, and Ser-826–Ile-868. The Importin N-terminal domain maps to Ala-23 to Ala-103.

Belongs to the importin beta family. Importin beta-1 subfamily. Forms a complex with the importin subunits alpha IMPA1 or IMPA2, the nucleoporin NUP62 and the Ran-GTP-binding proteins RAN1, RAN2 or RAN3. Expressed in roots, cotyledons, leaves, stems, petals, stamen, stigma, siliques, embryos and guard cells.

The protein localises to the cytoplasm. The protein resides in the nucleus. Its function is as follows. Acts as a negative effector of drought tolerance. Involved in the regulation of stomatal closure and in the abscisic acid (ABA)-mediated pathway that lead to drought tolerance. Does not directly mediate nuclear import of ABI1 and ABI2 which are key regulators of the ABA signaling pathway. May be involved in nuclear translocation of other type 2C protein phosphatases that mediate ABA signaling. In Arabidopsis thaliana (Mouse-ear cress), this protein is Importin subunit beta-1.